The primary structure comprises 228 residues: Prepilin leader peptidase/N-methyltransferase (228 aa).

Transmembrane regions (helical) follow at residues 18–38 (LWGSFLFLSGLAFGSFFNVVI), 95–115 (RYPLMELATGALFVLAGYLMA), 116–136 (PGVPLLGGLILLSLLLILAAI), 147–167 (LTLPLMWAGLLFNLSATYVPL), 168–188 (AEAVVGAMAGYLSLWSVYWVF), and 204–224 (LLAALGAWLGWQALPQTLLLA).

It belongs to the peptidase A24 family.

The protein resides in the cell inner membrane. The catalysed reaction is Typically cleaves a -Gly-|-Phe- bond to release an N-terminal, basic peptide of 5-8 residues from type IV prepilin, and then N-methylates the new N-terminal amino group, the methyl donor being S-adenosyl-L-methionine.. In terms of biological role, plays an essential role in type IV pili and type II pseudopili formation by proteolytically removing the leader sequence from substrate proteins and subsequently monomethylating the alpha-amino group of the newly exposed N-terminal phenylalanine. This chain is Prepilin leader peptidase/N-methyltransferase (pulO), found in Klebsiella pneumoniae.